Consider the following 165-residue polypeptide: Cytochrome c-type biogenesis protein CcmE (165 aa).

Residues 1 to 7 (MTRKQRR) lie on the Cytoplasmic side of the membrane. A helical; Signal-anchor for type II membrane protein membrane pass occupies residues 8–28 (LMMIGGAGVVLVVAVGLVLNA). Residues 29-165 (MRGSIVFFST…ASADAMRPAR (137 aa)) lie on the Periplasmic side of the membrane. 2 residues coordinate heme: His-122 and Tyr-126. Positions 138–149 (QGHWKDDYEKKP) are enriched in basic and acidic residues. Residues 138–165 (QGHWKDDYEKKPPGPGAAASADAMRPAR) form a disordered region. Positions 153–165 (GAAASADAMRPAR) are enriched in low complexity.

Belongs to the CcmE/CycJ family.

The protein localises to the cell inner membrane. In terms of biological role, heme chaperone required for the biogenesis of c-type cytochromes. Transiently binds heme delivered by CcmC and transfers the heme to apo-cytochromes in a process facilitated by CcmF and CcmH. The sequence is that of Cytochrome c-type biogenesis protein CcmE from Rhodopseudomonas palustris (strain HaA2).